The sequence spans 263 residues: 3-methyl-2-oxobutanoate hydroxymethyltransferase (263 aa).

Positions 45 and 84 each coordinate Mg(2+). Residues 45 to 46 (DS), aspartate 84, and lysine 112 contribute to the 3-methyl-2-oxobutanoate site. Mg(2+) is bound at residue glutamate 114. The active-site Proton acceptor is glutamate 181.

The protein belongs to the PanB family. Homodecamer; pentamer of dimers. Mg(2+) serves as cofactor.

It is found in the cytoplasm. It carries out the reaction 3-methyl-2-oxobutanoate + (6R)-5,10-methylene-5,6,7,8-tetrahydrofolate + H2O = 2-dehydropantoate + (6S)-5,6,7,8-tetrahydrofolate. It participates in cofactor biosynthesis; (R)-pantothenate biosynthesis; (R)-pantoate from 3-methyl-2-oxobutanoate: step 1/2. In terms of biological role, catalyzes the reversible reaction in which hydroxymethyl group from 5,10-methylenetetrahydrofolate is transferred onto alpha-ketoisovalerate to form ketopantoate. The chain is 3-methyl-2-oxobutanoate hydroxymethyltransferase from Proteus mirabilis (strain HI4320).